We begin with the raw amino-acid sequence, 298 residues long: uncharacterized protein (298 aa).

Residues 1-19 (MFRKFLFIQLLIVTSLVKA) form the signal peptide. Residues 278-298 (RNNPPLKNNNAKSKNSYETYK) are disordered. Over residues 279–298 (NNPPLKNNNAKSKNSYETYK) the composition is skewed to low complexity.

It to R.prowazekii RP296.

This is an uncharacterized protein from Rickettsia prowazekii (strain Madrid E).